We begin with the raw amino-acid sequence, 619 residues long: Eukaryotic translation initiation factor 3 subunit D (619 aa).

The interval 99-160 (QKQPHQRGRF…KWGARPPPKI (62 aa)) is disordered. Basic residues predominate over residues 100 to 121 (KQPHQRGRFRGNLRNQRGRGRG). The interval 288 to 302 (EFDLLTVNETAIEPP) is RNA gate. Positions 588–619 (TPAATETVATATTEATTPTTATKTTAPAAAQK) are disordered.

Belongs to the eIF-3 subunit D family. In terms of assembly, component of the eukaryotic translation initiation factor 3 (eIF-3) complex.

Its subcellular location is the cytoplasm. MRNA cap-binding component of the eukaryotic translation initiation factor 3 (eIF-3) complex, which is involved in protein synthesis of a specialized repertoire of mRNAs and, together with other initiation factors, stimulates binding of mRNA and methionyl-tRNAi to the 40S ribosome. The eIF-3 complex specifically targets and initiates translation of a subset of mRNAs involved in cell proliferation. In the eIF-3 complex, eif3d specifically recognizes and binds the 7-methylguanosine cap of a subset of mRNAs. This Aedes aegypti (Yellowfever mosquito) protein is Eukaryotic translation initiation factor 3 subunit D.